Reading from the N-terminus, the 85-residue chain is uncharacterized protein (85 aa).

This is an uncharacterized protein from Fowlpox virus (strain NVSL) (FPV).